The sequence spans 340 residues: Biotin synthase (340 aa).

The disordered stretch occupies residues 1–21 (MDAASVSFGSGHDLSSQPRHD). Residues 53–272 (NHVETANLLS…IAVARIMMPR (220 aa)) form the Radical SAM core domain. 3 residues coordinate [4Fe-4S] cluster: Cys68, Cys72, and Cys75. The [2Fe-2S] cluster site is built by Cys112, Cys143, Cys203, and Arg276.

This sequence belongs to the radical SAM superfamily. Biotin synthase family. In terms of assembly, homodimer. The cofactor is [4Fe-4S] cluster. [2Fe-2S] cluster serves as cofactor.

The enzyme catalyses (4R,5S)-dethiobiotin + (sulfur carrier)-SH + 2 reduced [2Fe-2S]-[ferredoxin] + 2 S-adenosyl-L-methionine = (sulfur carrier)-H + biotin + 2 5'-deoxyadenosine + 2 L-methionine + 2 oxidized [2Fe-2S]-[ferredoxin]. The protein operates within cofactor biosynthesis; biotin biosynthesis; biotin from 7,8-diaminononanoate: step 2/2. Catalyzes the conversion of dethiobiotin (DTB) to biotin by the insertion of a sulfur atom into dethiobiotin via a radical-based mechanism. The chain is Biotin synthase from Nitrobacter hamburgensis (strain DSM 10229 / NCIMB 13809 / X14).